The primary structure comprises 261 residues: tRNA pseudouridine synthase A (261 aa).

D51 (nucleophile) is an active-site residue. A substrate-binding site is contributed by Y109.

The protein belongs to the tRNA pseudouridine synthase TruA family. In terms of assembly, homodimer.

It catalyses the reaction uridine(38/39/40) in tRNA = pseudouridine(38/39/40) in tRNA. Formation of pseudouridine at positions 38, 39 and 40 in the anticodon stem and loop of transfer RNAs. This Shewanella baltica (strain OS223) protein is tRNA pseudouridine synthase A.